The sequence spans 340 residues: Protein-arginine kinase (340 aa).

The Phosphagen kinase C-terminal domain occupies 21–242; sequence VVLSSRIRLA…EQIIMQERVA (222 aa). ATP-binding positions include 24-28, His-79, Arg-113, 164-168, and 195-200; these read SSRIR, RASVM, and RGIYGE.

The protein belongs to the ATP:guanido phosphotransferase family.

It catalyses the reaction L-arginyl-[protein] + ATP = N(omega)-phospho-L-arginyl-[protein] + ADP + H(+). In terms of biological role, catalyzes the specific phosphorylation of arginine residues in proteins. This is Protein-arginine kinase from Listeria monocytogenes serotype 4b (strain CLIP80459).